Consider the following 446-residue polypeptide: Glucose-1-phosphate adenylyltransferase (446 aa).

Residues Tyr119, Gly184, 199–200, and Ser217 each bind alpha-D-glucose 1-phosphate; that span reads EK.

It belongs to the bacterial/plant glucose-1-phosphate adenylyltransferase family. As to quaternary structure, homotetramer.

The catalysed reaction is alpha-D-glucose 1-phosphate + ATP + H(+) = ADP-alpha-D-glucose + diphosphate. It functions in the pathway glycan biosynthesis; glycogen biosynthesis. In terms of biological role, involved in the biosynthesis of ADP-glucose, a building block required for the elongation reactions to produce glycogen. Catalyzes the reaction between ATP and alpha-D-glucose 1-phosphate (G1P) to produce pyrophosphate and ADP-Glc. The chain is Glucose-1-phosphate adenylyltransferase from Rhodopirellula baltica (strain DSM 10527 / NCIMB 13988 / SH1).